A 429-amino-acid polypeptide reads, in one-letter code: Phosphomethylpyrimidine synthase (429 aa).

Residues asparagine 66, methionine 95, tyrosine 124, histidine 163, 185-187, 226-229, and glutamate 265 each bind substrate; these read SRG and DGLR. A Zn(2+)-binding site is contributed by histidine 269. Tyrosine 292 lines the substrate pocket. Histidine 333 lines the Zn(2+) pocket. [4Fe-4S] cluster-binding residues include cysteine 407, cysteine 410, and cysteine 414.

Belongs to the ThiC family. It depends on [4Fe-4S] cluster as a cofactor.

It carries out the reaction 5-amino-1-(5-phospho-beta-D-ribosyl)imidazole + S-adenosyl-L-methionine = 4-amino-2-methyl-5-(phosphooxymethyl)pyrimidine + CO + 5'-deoxyadenosine + formate + L-methionine + 3 H(+). The protein operates within cofactor biosynthesis; thiamine diphosphate biosynthesis. Functionally, catalyzes the synthesis of the hydroxymethylpyrimidine phosphate (HMP-P) moiety of thiamine from aminoimidazole ribotide (AIR) in a radical S-adenosyl-L-methionine (SAM)-dependent reaction. The chain is Phosphomethylpyrimidine synthase from Pyrococcus furiosus (strain ATCC 43587 / DSM 3638 / JCM 8422 / Vc1).